Here is a 346-residue protein sequence, read N- to C-terminus: Cell division protein ZipA (346 aa).

The Periplasmic portion of the chain corresponds to 1-6 (MEDLQL). A helical membrane pass occupies residues 7–27 (VLFVLGAIAIVAVLVHGFWSI). Topologically, residues 28 to 346 (RRQQPKSLKD…DYLHRIRANA (319 aa)) are cytoplasmic. 2 disordered regions span residues 76 to 103 (ANEA…QPVE) and 121 to 145 (QPDF…RQEP).

The protein belongs to the ZipA family. In terms of assembly, interacts with FtsZ via their C-terminal domains.

Its subcellular location is the cell inner membrane. Its function is as follows. Essential cell division protein that stabilizes the FtsZ protofilaments by cross-linking them and that serves as a cytoplasmic membrane anchor for the Z ring. Also required for the recruitment to the septal ring of downstream cell division proteins. The protein is Cell division protein ZipA of Shewanella sp. (strain MR-4).